The following is a 321-amino-acid chain: Acetyl-coenzyme A carboxylase carboxyl transferase subunit alpha (321 aa).

The CoA carboxyltransferase C-terminal domain occupies K39–E293.

The protein belongs to the AccA family. Acetyl-CoA carboxylase is a heterohexamer composed of biotin carboxyl carrier protein (AccB), biotin carboxylase (AccC) and two subunits each of ACCase subunit alpha (AccA) and ACCase subunit beta (AccD).

It localises to the cytoplasm. The enzyme catalyses N(6)-carboxybiotinyl-L-lysyl-[protein] + acetyl-CoA = N(6)-biotinyl-L-lysyl-[protein] + malonyl-CoA. Its pathway is lipid metabolism; malonyl-CoA biosynthesis; malonyl-CoA from acetyl-CoA: step 1/1. Functionally, component of the acetyl coenzyme A carboxylase (ACC) complex. First, biotin carboxylase catalyzes the carboxylation of biotin on its carrier protein (BCCP) and then the CO(2) group is transferred by the carboxyltransferase to acetyl-CoA to form malonyl-CoA. The sequence is that of Acetyl-coenzyme A carboxylase carboxyl transferase subunit alpha from Methylococcus capsulatus (strain ATCC 33009 / NCIMB 11132 / Bath).